The following is a 326-amino-acid chain: Flap endonuclease 1 (326 aa).

Residues 1–100 (MGNADLRSLA…DEVEKRREQR (100 aa)) form an N-domain region. Residues aspartate 28, aspartate 82, glutamate 154, glutamate 156, aspartate 175, aspartate 177, and aspartate 225 each coordinate Mg(2+). The tract at residues 118 to 246 (RVAKLDSRTQ…TAVKDLHEHG (129 aa)) is I-domain. The interval 318 to 326 (VQTGLDRWA) is interaction with PCNA.

It belongs to the XPG/RAD2 endonuclease family. FEN1 subfamily. As to quaternary structure, interacts with PCNA. PCNA stimulates the nuclease activity without altering cleavage specificity. Mg(2+) is required as a cofactor.

Functionally, structure-specific nuclease with 5'-flap endonuclease and 5'-3' exonuclease activities involved in DNA replication and repair. During DNA replication, cleaves the 5'-overhanging flap structure that is generated by displacement synthesis when DNA polymerase encounters the 5'-end of a downstream Okazaki fragment. Binds the unpaired 3'-DNA end and kinks the DNA to facilitate 5' cleavage specificity. Cleaves one nucleotide into the double-stranded DNA from the junction in flap DNA, leaving a nick for ligation. Also involved in the base excision repair (BER) pathway. Acts as a genome stabilization factor that prevents flaps from equilibrating into structures that lead to duplications and deletions. Also possesses 5'-3' exonuclease activity on nicked or gapped double-stranded DNA. This is Flap endonuclease 1 from Haloarcula marismortui (strain ATCC 43049 / DSM 3752 / JCM 8966 / VKM B-1809) (Halobacterium marismortui).